A 229-amino-acid chain; its full sequence is Large ribosomal subunit protein bL25 (229 aa).

2 disordered regions span residues 1–21 (MSDALTLPAEARERAGKGASR) and 187–229 (PSAL…KGDD). Residues 196–207 (SEEEEDGEEVDA) show a composition bias toward acidic residues.

The protein belongs to the bacterial ribosomal protein bL25 family. CTC subfamily. In terms of assembly, part of the 50S ribosomal subunit; part of the 5S rRNA/L5/L18/L25 subcomplex. Contacts the 5S rRNA. Binds to the 5S rRNA independently of L5 and L18.

This is one of the proteins that binds to the 5S RNA in the ribosome where it forms part of the central protuberance. This is Large ribosomal subunit protein bL25 from Erythrobacter litoralis (strain HTCC2594).